A 573-amino-acid chain; its full sequence is Methionine--tRNA ligase (573 aa).

Residues 10–20 (PYVNSVPHLGN) carry the 'HIGH' region motif. Residues C143, C146, C156, and C159 each contribute to the Zn(2+) site. A 'KMSKS' region motif is present at residues 333–337 (KFSKS). Position 336 (K336) interacts with ATP.

This sequence belongs to the class-I aminoacyl-tRNA synthetase family. MetG type 1 subfamily. It depends on Zn(2+) as a cofactor.

The protein resides in the cytoplasm. The enzyme catalyses tRNA(Met) + L-methionine + ATP = L-methionyl-tRNA(Met) + AMP + diphosphate. Is required not only for elongation of protein synthesis but also for the initiation of all mRNA translation through initiator tRNA(fMet) aminoacylation. The polypeptide is Methionine--tRNA ligase (Saccharolobus solfataricus (strain ATCC 35092 / DSM 1617 / JCM 11322 / P2) (Sulfolobus solfataricus)).